The chain runs to 895 residues: Androgen receptor (895 aa).

The tract at residues Met-1–Lys-533 is modulating. Positions Met-1–Ala-562 are interaction with ZNF318. Disordered stretches follow at residues Val-33 to Leu-150 and Gln-178 to Gly-211. Low complexity-rich tracts occupy residues Ala-44 to Gln-81 and Gln-178 to Ala-200. Ser-65 is subject to Phosphoserine; by CDK9. Residue Ser-79 is modified to Phosphoserine. Polar residues predominate over residues Pro-201 to Gly-211. A Phosphotyrosine; by CSK modification is found at Tyr-208. Residue Ser-241 is modified to Phosphoserine. At Tyr-252 the chain carries Phosphotyrosine; by CSK and TNK2. Tyr-292, Tyr-331, Tyr-342, and Tyr-347 each carry phosphotyrosine; by CSK. At Tyr-348 the chain carries Phosphotyrosine; by CSK and TNK2. Lys-371 participates in a covalent cross-link: Glycyl lysine isopeptide (Lys-Gly) (interchain with G-Cter in SUMO). A Phosphotyrosine; by CSK modification is found at Tyr-378. A Glycyl lysine isopeptide (Lys-Gly) (interchain with G-Cter in SUMO) cross-link involves residue Lys-496. Phosphotyrosine; by CSK is present on residues Tyr-510 and Tyr-527. The segment at Tyr-527–Thr-894 is interaction with LPXN. The segment at residues Thr-534–Leu-607 is a DNA-binding region (nuclear receptor). 2 consecutive NR C4-type zinc fingers follow at residues Cys-535–Cys-555 and Cys-571–Cys-595. The segment at Tyr-547 to Val-637 is interaction with HIPK3. Residues Gln-567–Thr-894 are interaction with CCAR1. The interval Met-600–Thr-894 is interaction with KAT7. Position 626 is a phosphoserine; by STK4/MST1 (Ser-626). Residues Glu-644 to Ile-875 enclose the NR LBD domain. 17beta-hydroxy-5alpha-androstan-3-one-binding residues include Asn-681 and Arg-728. Glycyl lysine isopeptide (Lys-Gly) (interchain with G-Cter in ubiquitin) cross-links involve residues Lys-821 and Lys-823. Thr-853 is a 17beta-hydroxy-5alpha-androstan-3-one binding site. Tyr-891 bears the Phosphotyrosine; by CSK mark.

This sequence belongs to the nuclear hormone receptor family. NR3 subfamily. As to quaternary structure, binds DNA as a homodimer. Part of a ternary complex containing AR, EFCAB6/DJBP and PARK7. Interacts with HIPK3 and NR0B2 in the presence of androgen. The ligand binding domain interacts with KAT7/HBO1 in the presence of dihydrotestosterone. Interacts with EFCAB6/DJBP, PQBP1, RANBP9, RBAK, SPDEF, SRA1, TGFB1I1 and RREB1. Interacts with ZMIZ1/ZIMP10 and ZMIZ2/ZMIP7 which both enhance its transactivation activity. Interacts with SLC30A9 and RAD54L2/ARIP4. Interacts with MACROD1 (via macro domain). Interacts via the ligand-binding domain with LXXLL and FXXLF motifs from NCOA1, NCOA2, NCOA3 and MAGEA11. Interacts (via nuclear receptor DNA binding domain and nuclear receptor ligand binding domain) with NCOA4. The AR N-terminal poly-Gln region binds Ran resulting in enhancement of AR-mediated transactivation. Ran-binding decreases as the poly-Gln length increases. Interacts with HIP1 (via coiled coil domain). Interacts (via ligand-binding domain) with TRIM68. Interacts with TNK2. Interacts with USP26. Interacts with RNF6. Interacts (regulated by RNF6 probably through polyubiquitination) with RNF14; regulates AR transcriptional activity. Interacts with PRMT2 and TRIM24. Interacts with RACK1. Interacts with RANBP10; this interaction enhances dihydrotestosterone-induced AR transcriptional activity. Interacts with PRPF6 in a hormone-independent way; this interaction enhances dihydrotestosterone-induced AR transcriptional activity. Interacts with STK4/MST1. Interacts with ZIPK/DAPK3. Interacts with LPXN. Interacts with MAK. Part of a complex containing AR, MAK and NCOA3. Interacts with CRY1. Interacts with CCAR1 and GATA2. Interacts with ZNF318. Interacts with BUD31. Interacts with ARID4A. Interacts with ARID4B. Interacts (via NR LBD domain) with ZBTB7A; the interaction is direct and androgen-dependent. Interacts with NCOR1. Interacts with NCOR2. Interacts with CRY2 in a ligand-dependent manner. Post-translationally, phosphorylated in prostate cancer cells in response to several growth factors including EGF. Phosphorylation is induced by c-Src kinase (CSK). Tyr-510 is one of the major phosphorylation sites and an increase in phosphorylation and Src kinase activity is associated with prostate cancer progression. Phosphorylation by TNK2 enhances the DNA-binding and transcriptional activity. Phosphorylation at Ser-65 by CDK9 regulates AR promoter selectivity and cell growth. In terms of processing, sumoylated on Lys-371 (major) and Lys-496. Ubiquitinated. Deubiquitinated by USP26. 'Lys-6' and 'Lys-27'-linked polyubiquitination by RNF6 modulates AR transcriptional activity and specificity. Palmitoylated by ZDHHC7 and ZDHHC21. Palmitoylation is required for plasma membrane targeting and for rapid intracellular signaling via ERK and AKT kinases and cAMP generation.

The protein resides in the nucleus. The protein localises to the cytoplasm. In terms of biological role, steroid hormone receptors are ligand-activated transcription factors that regulate eukaryotic gene expression and affect cellular proliferation and differentiation in target tissues. Transcription factor activity is modulated by bound coactivator and corepressor proteins like ZBTB7A that recruits NCOR1 and NCOR2 to the androgen response elements/ARE on target genes, negatively regulating androgen receptor signaling and androgen-induced cell proliferation. Transcription activation is also down-regulated by NR0B2. Activated, but not phosphorylated, by HIPK3 and ZIPK/DAPK3. The sequence is that of Androgen receptor (AR) from Macaca mulatta (Rhesus macaque).